Consider the following 434-residue polypeptide: MVVKFTKSEALHKEALEHIVGGVNSPSRSFKAVGGGAPVAMERGKGAYFWDVDGNKYIDYLAAYGPIITGHAHPHITKAITTAAENGVLYGTPTALEVKFAKMLKEAMPALDKVRFVNSGTEAVMTTIRVARAYTGRTKIMKFAGCYHGHSDLVLVAAGSGPSTLGTPDSAGVPQSIAQEVITVPFNNVETLKEALDKWGHEVAAILVEPIVGNFGIVEPKPGFLEKVNELVHEAGALVIYDEVITAFRFMYGGAQDLLGVTPDLTALGKVIGGGLPIGAYGGKKEIMEQVAPLGPAYQAGTMAGNPASMASGIACLEVLQQEGLYEKLDELGAMLEKGILEQAEKHNIDITLNRLKGALTVYFTTNTIEDYDAAQDTDGEMFGKFFKLMLQEGINLAPSKYEAWFLTTEHTKEDIEYTIEAVGRAFAALANNK.

An N6-(pyridoxal phosphate)lysine modification is found at Lys-270.

The protein belongs to the class-III pyridoxal-phosphate-dependent aminotransferase family. HemL subfamily. As to quaternary structure, homodimer. Pyridoxal 5'-phosphate is required as a cofactor.

Its subcellular location is the cytoplasm. It carries out the reaction (S)-4-amino-5-oxopentanoate = 5-aminolevulinate. It participates in porphyrin-containing compound metabolism; protoporphyrin-IX biosynthesis; 5-aminolevulinate from L-glutamyl-tRNA(Glu): step 2/2. The polypeptide is Glutamate-1-semialdehyde 2,1-aminomutase 1 (Bacillus cereus (strain AH187)).